Here is a 63-residue protein sequence, read N- to C-terminus: Cecropin-A (63 aa).

Residues 1-22 (MNFVRILSFVFALVLALGAVSA) form the signal peptide. A propeptide spanning residues 23 to 26 (APEP) is cleaved from the precursor. A Leucine amide modification is found at Leu-61.

This sequence belongs to the cecropin family. Highest expression in fat body and hemocytes. Is also expressed in Malpighian tubules and to a much lesser extent in midgut. Not present in silk gland.

The protein resides in the secreted. In terms of biological role, cecropins have lytic and antibacterial activity against several Gram-positive and Gram-negative bacteria. The chain is Cecropin-A (CECA) from Bombyx mori (Silk moth).